Consider the following 347-residue polypeptide: Olfactory receptor 1L6 (347 aa).

At 1–62 (MSYFYRLKLM…GLSSNPQLQK (62 aa)) the chain is on the extracellular side. N-linked (GlcNAc...) asparagine glycosylation occurs at Asn41. Residues 63–86 (PLFAIFLIMYLLAAVGNVLIIPAI) traverse the membrane as a helical segment. At 87 to 94 (YSDPRLHT) the chain is on the cytoplasmic side. Residues 95-116 (PMYFFLSNLSFMDICFTTVIVP) form a helical membrane-spanning segment. At 117–137 (KMLVNFLSETKVISYVGCLAQ) the chain is on the extracellular side. Cys134 and Cys226 are oxidised to a cystine. The helical transmembrane segment at 138 to 157 (MYFFMAFGNTDSYLLASMAI) threads the bilayer. Residues 158-176 (DRLVAICNPLHYDVVMKPR) lie on the Cytoplasmic side of the membrane. Residues 177 to 195 (HCLLMLLGSCSISHLHSLF) form a helical membrane-spanning segment. The Extracellular segment spans residues 196–233 (RVLLMSRLSFCASHIIKHFFCDTQPVLKLSCSDTSSSQ). Residues 234–256 (MVVMTETLAVIVTPFLCIIFSYL) traverse the membrane as a helical segment. The Cytoplasmic segment spans residues 257–273 (RIMVTVLRIPSAAGKWK). A helical transmembrane segment spans residues 274–296 (AFSTCGSHLTAVALFYGSIIYVY). Residues 297 to 309 (FRPLSMYSVVRDR) lie on the Extracellular side of the membrane. Residues 310–329 (VATVMYTVVTPMLNPFIYSL) form a helical membrane-spanning segment. The Cytoplasmic portion of the chain corresponds to 330 to 347 (RNKDMKRGLKKLQDRIYR).

It belongs to the G-protein coupled receptor 1 family.

The protein resides in the cell membrane. In terms of biological role, odorant receptor. The protein is Olfactory receptor 1L6 (OR1L6) of Homo sapiens (Human).